The following is a 266-amino-acid chain: Ribosomal RNA small subunit methyltransferase A (266 aa).

S-adenosyl-L-methionine contacts are provided by asparagine 13, leucine 15, glycine 40, glutamate 61, aspartate 86, and asparagine 110.

Belongs to the class I-like SAM-binding methyltransferase superfamily. rRNA adenine N(6)-methyltransferase family. RsmA subfamily.

It is found in the cytoplasm. The catalysed reaction is adenosine(1518)/adenosine(1519) in 16S rRNA + 4 S-adenosyl-L-methionine = N(6)-dimethyladenosine(1518)/N(6)-dimethyladenosine(1519) in 16S rRNA + 4 S-adenosyl-L-homocysteine + 4 H(+). Its function is as follows. Specifically dimethylates two adjacent adenosines (A1518 and A1519) in the loop of a conserved hairpin near the 3'-end of 16S rRNA in the 30S particle. May play a critical role in biogenesis of 30S subunits. The protein is Ribosomal RNA small subunit methyltransferase A of Hydrogenovibrio crunogenus (strain DSM 25203 / XCL-2) (Thiomicrospira crunogena).